A 405-amino-acid polypeptide reads, in one-letter code: Enoyl-[acyl-carrier-protein] reductase [NADH] (405 aa).

NAD(+) is bound by residues 48-53 (GASSGY), 74-75 (FE), 111-112 (DA), and 140-141 (LA). Residue Tyr226 coordinates substrate. The active-site Proton donor is the Tyr236. NAD(+) contacts are provided by residues Lys245 and 274–276 (VVT).

Belongs to the TER reductase family. In terms of assembly, monomer.

It carries out the reaction a 2,3-saturated acyl-[ACP] + NAD(+) = a (2E)-enoyl-[ACP] + NADH + H(+). The protein operates within lipid metabolism; fatty acid biosynthesis. Involved in the final reduction of the elongation cycle of fatty acid synthesis (FAS II). Catalyzes the reduction of a carbon-carbon double bond in an enoyl moiety that is covalently linked to an acyl carrier protein (ACP). In Xanthomonas oryzae pv. oryzae (strain PXO99A), this protein is Enoyl-[acyl-carrier-protein] reductase [NADH].